The primary structure comprises 524 residues: Homeobox protein engrailed-like SMOX-2 (524 aa).

The disordered stretch occupies residues 194-218; sequence SSSSSSSSSSSSSSSSSSCSTNSSS. A DNA-binding region (homeobox) is located at residues 423-482; sequence LKRPRTSFTVPQLKRLSQEFEKNRYLDELRRKKLATELDLRESQVKIWFQNKRAKTKKAS.

It belongs to the engrailed homeobox family.

It is found in the nucleus. The sequence is that of Homeobox protein engrailed-like SMOX-2 (SMOX-2) from Schistosoma mansoni (Blood fluke).